The chain runs to 341 residues: Dehydration-responsive element-binding protein 2C (341 aa).

Positions 8–48 (RKRKSRGTRDVAEILRQWREYNEQIEAESCIDGGGPKSIRK) match the Nuclear localization signal motif. The disordered stretch occupies residues 36-63 (SCIDGGGPKSIRKPPPKGSRKGCMKGKG). The span at 45–59 (SIRKPPPKGSRKGCM) shows a compositional bias: basic residues. Residues 71 to 128 (DYRGVRQRRWGKWVAEIREPDGGARLWLGTFSSSYEAALAYDEAAKAIYGQSARLNLP) constitute a DNA-binding region (AP2/ERF).

This sequence belongs to the AP2/ERF transcription factor family. ERF subfamily.

The protein resides in the nucleus. Functionally, transcriptional activator that binds specifically to the DNA sequence 5'-[AG]CCGAC-3'. Binding to the C-repeat/DRE element mediates high salinity- and abscisic acid-inducible transcription. In Arabidopsis thaliana (Mouse-ear cress), this protein is Dehydration-responsive element-binding protein 2C (DREB2C).